We begin with the raw amino-acid sequence, 186 residues long: Dihydrofolate reductase (186 aa).

One can recognise a DHFR domain in the interval 2–180 (RLNVVVAVSE…FTFKFCVYDV (179 aa)). NADP(+) contacts are provided by residues alanine 8 and 14 to 20 (GIGKGGG). 28–33 (DMEFFK) is a binding site for substrate. 51–53 (RVT) contacts NADP(+). Arginine 67 contacts substrate. NADP(+)-binding positions include 73 to 75 (SST) and 112 to 119 (GGYRLYKE).

This sequence belongs to the dihydrofolate reductase family. Monomer.

The catalysed reaction is (6S)-5,6,7,8-tetrahydrofolate + NADP(+) = 7,8-dihydrofolate + NADPH + H(+). It functions in the pathway cofactor biosynthesis; tetrahydrofolate biosynthesis; 5,6,7,8-tetrahydrofolate from 7,8-dihydrofolate: step 1/1. Its function is as follows. Key enzyme in folate metabolism. Contributes to the de novo mitochondrial thymidylate biosynthesis pathway. Catalyzes an essential reaction for de novo glycine and purine synthesis, and for DNA precursor synthesis. This chain is Dihydrofolate reductase, found in Schistosoma mansoni (Blood fluke).